Here is a 254-residue protein sequence, read N- to C-terminus: Zinc finger FYVE domain-containing protein 21 (254 aa).

An FYVE-type zinc finger spans residues 44 to 104 (DKECPRCMQC…QCAGCAPVSR (61 aa)). 8 residues coordinate Zn(2+): C50, C53, C66, C69, C74, C77, C96, and C99. Residues 107-254 (ADFYDRQLKL…AKLLYESRDQ (148 aa)) form a PH-like region.

In terms of assembly, interacts with PTK2/FAK1.

The protein localises to the cell junction. The protein resides in the focal adhesion. It localises to the cytoplasmic vesicle. It is found in the endosome. Functionally, plays a role in cell adhesion, and thereby in cell motility which requires repeated formation and disassembly of focal adhesions. Regulates microtubule-induced PTK2/FAK1 dephosphorylation, an event important for focal adhesion disassembly, as well as integrin beta-1/ITGB1 cell surface expression. The chain is Zinc finger FYVE domain-containing protein 21 (ZFYVE21) from Bos taurus (Bovine).